A 219-amino-acid chain; its full sequence is 2-hydroxy-3-keto-5-methylthiopentenyl-1-phosphate phosphatase (219 aa).

It belongs to the HAD-like hydrolase superfamily. MtnX family.

The enzyme catalyses 2-hydroxy-5-methylsulfanyl-3-oxopent-1-enyl phosphate + H2O = 1,2-dihydroxy-5-(methylsulfanyl)pent-1-en-3-one + phosphate. Its pathway is amino-acid biosynthesis; L-methionine biosynthesis via salvage pathway; L-methionine from S-methyl-5-thio-alpha-D-ribose 1-phosphate: step 4/6. Functionally, dephosphorylates 2-hydroxy-3-keto-5-methylthiopentenyl-1-phosphate (HK-MTPenyl-1-P) yielding 1,2-dihydroxy-3-keto-5-methylthiopentene (DHK-MTPene). The protein is 2-hydroxy-3-keto-5-methylthiopentenyl-1-phosphate phosphatase of Bacillus mycoides (strain KBAB4) (Bacillus weihenstephanensis).